Here is a 441-residue protein sequence, read N- to C-terminus: Protein kinase C and casein kinase substrate in neurons protein 1 (441 aa).

Phosphoserine is present on residues Ser2 and Ser76. The 271-residue stretch at 10–280 folds into the F-BAR domain; sequence EEITDSFWEV…AIRGADAQED (271 aa). The stretch at 23-272 forms a coiled coil; the sequence is KRTVKRIDDG…HVYRELEQAI (250 aa). Thr181 is modified (phosphothreonine). Residues 297–380 form a disordered region; it reads PQFEEWNPDL…ANGGANPFED (84 aa). Positions 311 to 321 are enriched in basic and acidic residues; it reads AKKEKQPKKAE. Residues 324-355 are compositionally biased toward polar residues; it reads TLSNATGAVESTSQAGDRGSVSSYDRGQTYAT. Residues Ser343, Ser345, Ser346, Ser358, and Ser362 each carry the phosphoserine modification. The 60-residue stretch at 382–441 folds into the SH3 domain; sequence AKGVRVRALYDYDGQEQDELSFKAGDELTKLGEEDEQGWCRGRLDSGQLGLYPANYVEAI. Position 391 is a phosphotyrosine (Tyr391). Phosphoserine occurs at positions 402 and 427.

This sequence belongs to the PACSIN family. Homodimer. May form heterooligomers with other PACSINs. Interacts with both COBL and DBNL. Identified in a complex composed of COBL, PACSIN1 and WASL. Interacts with EHD3. Interacts (via SH3 domain) with SYNJ1 and WASL. Interacts (via SH3 domain) with DNM1; the interaction is reduced by DNM1 phosphorylation. Interacts with DNM2 and DNM3. Interacts with MAPT. Interacts with EHD1. Interacts with TRPV4. In terms of processing, phosphorylated by casein kinase 2 (CK2) and protein kinase C (PKC). As to expression, highly expressed in brain. Detected in hippocampus and dorsal root ganglion neurons. Detected in rod photoreceptor terminals in the outer plexiform layer of the retina (at protein level). In CNS neurons, high levels in the pyramidal cells of the hippocampus, Purkinje cells of the cerebellum and large neurons of the cortex and brain stem.

Its subcellular location is the cytoplasm. The protein localises to the cell projection. It is found in the synapse. It localises to the synaptosome. The protein resides in the ruffle membrane. Its subcellular location is the membrane. The protein localises to the cytoplasmic vesicle membrane. It is found in the cytosol. It localises to the cell membrane. Its function is as follows. Binds to membranes via its F-BAR domain and mediates membrane tubulation. Plays a role in the reorganization of the microtubule cytoskeleton via its interaction with MAPT; this decreases microtubule stability and inhibits MAPT-induced microtubule polymerization. Plays a role in cellular transport processes by recruiting DNM1, DNM2 and DNM3 to membranes. Plays a role in the reorganization of the actin cytoskeleton and in neuron morphogenesis via its interaction with COBL and WASL, and by recruiting COBL to the cell cortex. Plays a role in the regulation of neurite formation, neurite branching and the regulation of neurite length. Required for normal synaptic vesicle endocytosis; this process retrieves previously released neurotransmitters to accommodate multiple cycles of neurotransmission. Required for normal excitatory and inhibitory synaptic transmission. This Mus musculus (Mouse) protein is Protein kinase C and casein kinase substrate in neurons protein 1 (Pacsin1).